The following is a 288-amino-acid chain: ATP synthase gamma chain (288 aa).

Belongs to the ATPase gamma chain family. F-type ATPases have 2 components, CF(1) - the catalytic core - and CF(0) - the membrane proton channel. CF(1) has five subunits: alpha(3), beta(3), gamma(1), delta(1), epsilon(1). CF(0) has three main subunits: a, b and c.

Its subcellular location is the cell membrane. Its function is as follows. Produces ATP from ADP in the presence of a proton gradient across the membrane. The gamma chain is believed to be important in regulating ATPase activity and the flow of protons through the CF(0) complex. This Symbiobacterium thermophilum (strain DSM 24528 / JCM 14929 / IAM 14863 / T) protein is ATP synthase gamma chain.